We begin with the raw amino-acid sequence, 145 residues long: D-aminoacyl-tRNA deacylase (145 aa).

The Gly-cisPro motif, important for rejection of L-amino acids motif lies at 137–138; sequence GP.

It belongs to the DTD family. As to quaternary structure, homodimer.

Its subcellular location is the cytoplasm. It carries out the reaction glycyl-tRNA(Ala) + H2O = tRNA(Ala) + glycine + H(+). It catalyses the reaction a D-aminoacyl-tRNA + H2O = a tRNA + a D-alpha-amino acid + H(+). Functionally, an aminoacyl-tRNA editing enzyme that deacylates mischarged D-aminoacyl-tRNAs. Also deacylates mischarged glycyl-tRNA(Ala), protecting cells against glycine mischarging by AlaRS. Acts via tRNA-based rather than protein-based catalysis; rejects L-amino acids rather than detecting D-amino acids in the active site. By recycling D-aminoacyl-tRNA to D-amino acids and free tRNA molecules, this enzyme counteracts the toxicity associated with the formation of D-aminoacyl-tRNA entities in vivo and helps enforce protein L-homochirality. This Ruegeria pomeroyi (strain ATCC 700808 / DSM 15171 / DSS-3) (Silicibacter pomeroyi) protein is D-aminoacyl-tRNA deacylase.